A 467-amino-acid polypeptide reads, in one-letter code: ATP synthase subunit beta (467 aa).

156–163 (GGAGVGKT) serves as a coordination point for ATP.

Belongs to the ATPase alpha/beta chains family. In terms of assembly, F-type ATPases have 2 components, CF(1) - the catalytic core - and CF(0) - the membrane proton channel. CF(1) has five subunits: alpha(3), beta(3), gamma(1), delta(1), epsilon(1). CF(0) has three main subunits: a(1), b(2) and c(9-12). The alpha and beta chains form an alternating ring which encloses part of the gamma chain. CF(1) is attached to CF(0) by a central stalk formed by the gamma and epsilon chains, while a peripheral stalk is formed by the delta and b chains.

Its subcellular location is the cell inner membrane. It carries out the reaction ATP + H2O + 4 H(+)(in) = ADP + phosphate + 5 H(+)(out). Functionally, produces ATP from ADP in the presence of a proton gradient across the membrane. The catalytic sites are hosted primarily by the beta subunits. The sequence is that of ATP synthase subunit beta from Ralstonia nicotianae (strain ATCC BAA-1114 / GMI1000) (Ralstonia solanacearum).